Reading from the N-terminus, the 329-residue chain is Malate dehydrogenase (329 aa).

12–18 (GAAGQIG) provides a ligand contact to NAD(+). Residues arginine 95 and arginine 101 each coordinate substrate. NAD(+)-binding positions include asparagine 108, glutamine 115, and 132–134 (VGN). The substrate site is built by asparagine 134 and arginine 165. The active-site Proton acceptor is histidine 190.

Belongs to the LDH/MDH superfamily. MDH type 2 family.

The catalysed reaction is (S)-malate + NAD(+) = oxaloacetate + NADH + H(+). Catalyzes the reversible oxidation of malate to oxaloacetate. The polypeptide is Malate dehydrogenase (Bordetella avium (strain 197N)).